We begin with the raw amino-acid sequence, 477 residues long: Ribulose bisphosphate carboxylase large chain (477 aa).

Positions 1–2 (MS) are excised as a propeptide. Pro-3 is modified (N-acetylproline). Residue Lys-14 is modified to N6,N6,N6-trimethyllysine. Substrate-binding residues include Asn-123 and Thr-173. The Proton acceptor role is filled by Lys-175. Lys-177 provides a ligand contact to substrate. Residues Lys-201, Asp-203, and Glu-204 each coordinate Mg(2+). The residue at position 201 (Lys-201) is an N6-carboxylysine. His-294 (proton acceptor) is an active-site residue. Residues Arg-295, His-327, and Ser-379 each coordinate substrate.

It belongs to the RuBisCO large chain family. Type I subfamily. In terms of assembly, heterohexadecamer of 8 large chains and 8 small chains; disulfide-linked. The disulfide link is formed within the large subunit homodimers. Mg(2+) is required as a cofactor. The disulfide bond which can form in the large chain dimeric partners within the hexadecamer appears to be associated with oxidative stress and protein turnover.

The protein resides in the plastid. It localises to the chloroplast. The catalysed reaction is 2 (2R)-3-phosphoglycerate + 2 H(+) = D-ribulose 1,5-bisphosphate + CO2 + H2O. It catalyses the reaction D-ribulose 1,5-bisphosphate + O2 = 2-phosphoglycolate + (2R)-3-phosphoglycerate + 2 H(+). Functionally, ruBisCO catalyzes two reactions: the carboxylation of D-ribulose 1,5-bisphosphate, the primary event in carbon dioxide fixation, as well as the oxidative fragmentation of the pentose substrate in the photorespiration process. Both reactions occur simultaneously and in competition at the same active site. This Nicotiana acuminata (Acuminate tobacco) protein is Ribulose bisphosphate carboxylase large chain.